A 123-amino-acid chain; its full sequence is cAMP-responsive element-binding protein-like 2 (123 aa).

The interval 1 to 24 (MDDSKVVGGKVKKPGKRGRKPAKI) is disordered. Residues 10 to 21 (KVKKPGKRGRKP) show a composition bias toward basic residues. The bZIP domain maps to 23 to 86 (KIDLKAKLER…MAMDQGKIPS (64 aa)). Residues 29-60 (KLERSRQSARECRARKKLRYQYLEELVSSRER) are basic motif. The leucine-zipper stretch occupies residues 62–69 (ICALREEL). The segment at 93–123 (TGEEQNKSQQNSSRHPKAGKTDANTNSLVGN) is disordered. Polar residues predominate over residues 114 to 123 (DANTNSLVGN).

This sequence belongs to the bZIP family. ATF subfamily. As to quaternary structure, interacts with CREB1; regulates CREB1 phosphorylation, stability and transcriptional activity. Post-translationally, phosphorylated by AMPK.

It localises to the nucleus. Functionally, probable regulator of CREB1 transcriptional activity which is involved in adipose cells differentiation. May also play a regulatory role in the cell cycle. This Rattus norvegicus (Rat) protein is cAMP-responsive element-binding protein-like 2 (Crebl2).